The chain runs to 394 residues: Actin-related protein 2 (394 aa).

Methionine 1 is subject to N-acetylmethionine. Residues 160-162 (GDG) and 214-218 (RMIKE) each bind ATP. At lysine 299 the chain carries N6-acetyllysine. 305 to 310 (GGSTMY) contacts ATP. Position 322 is an N6-acetyllysine (lysine 322).

It belongs to the actin family. ARP2 subfamily. In terms of assembly, component of the Arp2/3 complex composed of ACTR2/ARP2, ACTR3/ARP3, ARPC1B/p41-ARC, ARPC2/p34-ARC, ARPC3/p21-ARC, ARPC4/p20-ARC and ARPC5/p16-ARC. Interacts with AVIL.

The protein resides in the cytoplasm. The protein localises to the cytoskeleton. It is found in the cell projection. Its subcellular location is the nucleus. In terms of biological role, ATP-binding component of the Arp2/3 complex, a multiprotein complex that mediates actin polymerization upon stimulation by nucleation-promoting factor (NPF). The Arp2/3 complex mediates the formation of branched actin networks in the cytoplasm, providing the force for cell motility. Seems to contact the pointed end of the daughter actin filament. In podocytes, required for the formation of lamellipodia downstream of AVIL and PLCE1 regulation. In addition to its role in the cytoplasmic cytoskeleton, the Arp2/3 complex also promotes actin polymerization in the nucleus, thereby regulating gene transcription and repair of damaged DNA. The Arp2/3 complex promotes homologous recombination (HR) repair in response to DNA damage by promoting nuclear actin polymerization, leading to drive motility of double-strand breaks (DSBs). The sequence is that of Actin-related protein 2 (ACTR2) from Pongo abelii (Sumatran orangutan).